A 498-amino-acid chain; its full sequence is Glutamate--tRNA ligase (498 aa).

Residues 11–21 carry the 'HIGH' region motif; sequence PSPTGHLHIGN. The short motif at 260–264 is the 'KMSKS' region element; that stretch reads KLSKR. An ATP-binding site is contributed by Lys-263.

The protein belongs to the class-I aminoacyl-tRNA synthetase family. Glutamate--tRNA ligase type 1 subfamily. In terms of assembly, monomer.

Its subcellular location is the cytoplasm. It catalyses the reaction tRNA(Glu) + L-glutamate + ATP = L-glutamyl-tRNA(Glu) + AMP + diphosphate. Its function is as follows. Catalyzes the attachment of glutamate to tRNA(Glu) in a two-step reaction: glutamate is first activated by ATP to form Glu-AMP and then transferred to the acceptor end of tRNA(Glu). The polypeptide is Glutamate--tRNA ligase (Leuconostoc citreum (strain KM20)).